We begin with the raw amino-acid sequence, 448 residues long: Methylenetetrahydrofolate--tRNA-(uracil-5-)-methyltransferase TrmFO (448 aa).

Position 13–18 (13–18 (GAGLAG)) interacts with FAD.

The protein belongs to the MnmG family. TrmFO subfamily. The cofactor is FAD.

It is found in the cytoplasm. The enzyme catalyses uridine(54) in tRNA + (6R)-5,10-methylene-5,6,7,8-tetrahydrofolate + NADH + H(+) = 5-methyluridine(54) in tRNA + (6S)-5,6,7,8-tetrahydrofolate + NAD(+). It carries out the reaction uridine(54) in tRNA + (6R)-5,10-methylene-5,6,7,8-tetrahydrofolate + NADPH + H(+) = 5-methyluridine(54) in tRNA + (6S)-5,6,7,8-tetrahydrofolate + NADP(+). Its function is as follows. Catalyzes the folate-dependent formation of 5-methyl-uridine at position 54 (M-5-U54) in all tRNAs. The protein is Methylenetetrahydrofolate--tRNA-(uracil-5-)-methyltransferase TrmFO of Streptococcus pyogenes serotype M5 (strain Manfredo).